Here is a 300-residue protein sequence, read N- to C-terminus: uncharacterized protein (300 aa).

CBS domains are found at residues 10-68, 88-148, 152-207, and 226-284; these read RFPP…FRDV, FLKY…HVKV, MTSE…EDVL, and ISSK…GVEI.

This is an uncharacterized protein from Thermofilum pendens.